Reading from the N-terminus, the 553-residue chain is ATP synthase F(1) complex subunit alpha, mitochondrial (553 aa).

The transit peptide at 1-43 (MLSVRVAAAVARALPRRAGLVSKNALGSSFIAARNLHASNSRL) directs the protein to the mitochondrion. Q44 bears the Pyrrolidone carboxylic acid mark. 2 positions are modified to phosphoserine: S53 and S65. Residue S76 is modified to Phosphoserine; alternate. The O-linked (GlcNAc) serine; alternate glycan is linked to S76. A Phosphoserine modification is found at S106. Residues K123, K126, and K132 each carry the N6-acetyllysine modification. Residue T134 is modified to Phosphothreonine. The residue at position 161 (K161) is an N6-acetyllysine; alternate. K161 carries the N6-succinyllysine; alternate modification. S166 bears the Phosphoserine mark. Residue K167 is modified to N6-acetyllysine; alternate. K167 is modified (N6-succinyllysine; alternate). At S184 the chain carries Phosphoserine. R204 is subject to Omega-N-methylarginine. ATP-binding residues include Q215, G217, K218, T219, and S220. T219 serves as a coordination point for Mg(2+). N6-acetyllysine; alternate occurs at positions 230 and 239. N6-succinyllysine; alternate occurs at positions 230 and 239. The residue at position 240 (K240) is an N6-acetyllysine. N6-acetyllysine; alternate is present on residues K261 and K305. N6-succinyllysine; alternate occurs at positions 261 and 305. Residue D312 coordinates Mg(2+). At K427 the chain carries N6-acetyllysine; alternate. Residue K427 is modified to N6-succinyllysine; alternate. An N6-acetyllysine modification is found at K434. Residues Q473 and Q475 each contribute to the ATP site. 4 positions are modified to N6-acetyllysine; alternate: K498, K506, K531, and K539. N6-succinyllysine; alternate is present on residues K498, K506, K531, and K539. An N6-acetyllysine modification is found at K541.

It belongs to the ATPase alpha/beta chains family. As to quaternary structure, homotrimer. Component of the ATP synthase complex composed at least of ATP5F1A/subunit alpha, ATP5F1B/subunit beta, ATP5MC1/subunit c (homooctomer), MT-ATP6/subunit a, MT-ATP8/subunit 8, ATP5ME/subunit e, ATP5MF/subunit f, ATP5MG/subunit g, ATP5MK/subunit k, ATP5MJ/subunit j, ATP5F1C/subunit gamma, ATP5F1D/subunit delta, ATP5F1E/subunit epsilon, ATP5PF/subunit F6, ATP5PB/subunit b, ATP5PD/subunit d, ATP5PO/subunit OSCP. ATP synthase complex consists of a soluble F(1) head domain (subunits alpha(3) and beta(3)) - the catalytic core - and a membrane F(0) domain - the membrane proton channel (subunits c, a, 8, e, f, g, k and j). These two domains are linked by a central stalk (subunits gamma, delta, and epsilon) rotating inside the F1 region and a stationary peripheral stalk (subunits F6, b, d, and OSCP). Interacts with ATPAF2. Interacts with HRG; the interaction occurs on the surface of T-cells and alters the cell morphology when associated with concanavalin (in vitro). Interacts with PLG (angiostatin peptide); the interaction inhibits most of the angiogenic properties of angiostatin. Interacts with BLOC1S1. Interacts with BCL2L1 isoform BCL-X(L); the interaction mediates the association of BCL2L1 isoform BCL-X(L) with the mitochondrial membrane F(1)F(0) ATP synthase and enhances neurons metabolic efficiency. Interacts with CLN5 and PPT1. Interacts with S100A1; this interaction increases F1-ATPase activity. Interacts with ABCB7; this interaction allows the regulation of cellular iron homeostasis and cellular reactive oxygen species (ROS) levels in cardiomyocytes. In terms of processing, acetylated on lysine residues. BLOC1S1 is required for acetylation. In terms of tissue distribution, heart muscle (at protein level). Heart and liver.

It is found in the mitochondrion inner membrane. Its subcellular location is the cell membrane. Functionally, subunit alpha, of the mitochondrial membrane ATP synthase complex (F(1)F(0) ATP synthase or Complex V) that produces ATP from ADP in the presence of a proton gradient across the membrane which is generated by electron transport complexes of the respiratory chain. ATP synthase complex consist of a soluble F(1) head domain - the catalytic core - and a membrane F(1) domain - the membrane proton channel. These two domains are linked by a central stalk rotating inside the F(1) region and a stationary peripheral stalk. During catalysis, ATP synthesis in the catalytic domain of F(1) is coupled via a rotary mechanism of the central stalk subunits to proton translocation. In vivo, can only synthesize ATP although its ATP hydrolase activity can be activated artificially in vitro. With the catalytic subunit beta (ATP5F1B), forms the catalytic core in the F(1) domain. Subunit alpha does not bear the catalytic high-affinity ATP-binding sites. In Bos taurus (Bovine), this protein is ATP synthase F(1) complex subunit alpha, mitochondrial.